A 321-amino-acid chain; its full sequence is Lipoyl synthase (321 aa).

Positions 68, 73, 79, 94, 98, 101, and 308 each coordinate [4Fe-4S] cluster. Positions 80–297 (FNHGTATFMI…KVIALELGFT (218 aa)) constitute a Radical SAM core domain.

Belongs to the radical SAM superfamily. Lipoyl synthase family. The cofactor is [4Fe-4S] cluster.

The protein resides in the cytoplasm. It carries out the reaction [[Fe-S] cluster scaffold protein carrying a second [4Fe-4S](2+) cluster] + N(6)-octanoyl-L-lysyl-[protein] + 2 oxidized [2Fe-2S]-[ferredoxin] + 2 S-adenosyl-L-methionine + 4 H(+) = [[Fe-S] cluster scaffold protein] + N(6)-[(R)-dihydrolipoyl]-L-lysyl-[protein] + 4 Fe(3+) + 2 hydrogen sulfide + 2 5'-deoxyadenosine + 2 L-methionine + 2 reduced [2Fe-2S]-[ferredoxin]. It functions in the pathway protein modification; protein lipoylation via endogenous pathway; protein N(6)-(lipoyl)lysine from octanoyl-[acyl-carrier-protein]: step 2/2. Its function is as follows. Catalyzes the radical-mediated insertion of two sulfur atoms into the C-6 and C-8 positions of the octanoyl moiety bound to the lipoyl domains of lipoate-dependent enzymes, thereby converting the octanoylated domains into lipoylated derivatives. This chain is Lipoyl synthase, found in Aliivibrio salmonicida (strain LFI1238) (Vibrio salmonicida (strain LFI1238)).